Reading from the N-terminus, the 919-residue chain is Kinesin-like protein KIN-UA (919 aa).

The tract at residues 1-68 is disordered; sequence MSTTSGTGGV…SGGGGDAGVP (68 aa). Positions 15-51 are enriched in low complexity; it reads GTQRSSLRTQSSASTSSGGQKASVKSKSVLRKSSPAA. Over residues 52–66 the composition is skewed to gly residues; it reads LGGGSSKSGGGGDAG. The Kinesin motor domain occupies 70–412; it reads RVRVAVRLRP…IMFGQRAMKV (343 aa). ATP is bound at residue 155–162; it reads GQTGTGKT. The interval 286 to 305 is disordered; that stretch reads TRDGLSSESNGNSHMTKSLK. The span at 291-301 shows a compositional bias: polar residues; it reads SSESNGNSHMT. Residues 382-390 carry the D-BOX motif; that stretch reads RTSLVITIG. 2 coiled-coil regions span residues 428 to 492 and 530 to 621; these read SRRL…SIKK and ALEE…LEQH. ARM repeat units lie at residues 650-689, 691-731, 733-773, and 775-814; these read KPPVARLFEQVGLQKILSLLEAEDADVRIHAVKVVANLAA, EANQ…NLAM, ETNQ…NLCG, and DKLQTKLRSEGGIAALLGMVRCGHPDVLAQVARGIANFAK.

The protein belongs to the TRAFAC class myosin-kinesin ATPase superfamily. Kinesin family. Ungrouped subfamily. Interacts (via C-terminus) with NEK5. As to expression, expressed in leaves, guard cells, trichomes, vascular tissues, stele of the root tip region and columella cells. Highest expression detected in guard cells.

It localises to the cytoplasm. It is found in the cytoskeleton. The chain is Kinesin-like protein KIN-UA from Arabidopsis thaliana (Mouse-ear cress).